The sequence spans 113 residues: Class I hydrophobin POH1 (113 aa).

A signal peptide spans methionine 1–threonine 26. 4 cysteine pairs are disulfide-bonded: cysteine 31/cysteine 93, cysteine 38/cysteine 87, cysteine 39/cysteine 74, and cysteine 94/cysteine 107.

This sequence belongs to the fungal hydrophobin family. As to quaternary structure, self-assembles to form functional amyloid fibrils called rodlets. Self-assembly into fibrillar rodlets occurs spontaneously at hydrophobic:hydrophilic interfaces and the rodlets further associate laterally to form amphipathic monolayers. In terms of tissue distribution, expressed in the fruiting bodies but not in vegetative mycelium.

The protein resides in the secreted. The protein localises to the cell wall. In terms of biological role, aerial growth, conidiation, and dispersal of filamentous fungi in the environment rely upon a capability of their secreting small amphipathic proteins called hydrophobins (HPBs) with low sequence identity. Class I can self-assemble into an outermost layer of rodlet bundles on aerial cell surfaces, conferring cellular hydrophobicity that supports fungal growth, development and dispersal; whereas Class II form highly ordered films at water-air interfaces through intermolecular interactions but contribute nothing to the rodlet structure. POH1 is a class I hydrophobin that is involved in the formation of mycelium knots and subsequent fruiting bodies. The chain is Class I hydrophobin POH1 from Pleurotus ostreatus (Oyster mushroom).